The primary structure comprises 366 residues: Histidinol-phosphate aminotransferase (366 aa).

Lys231 carries the post-translational modification N6-(pyridoxal phosphate)lysine.

Belongs to the class-II pyridoxal-phosphate-dependent aminotransferase family. Histidinol-phosphate aminotransferase subfamily. Pyridoxal 5'-phosphate is required as a cofactor.

It catalyses the reaction L-histidinol phosphate + 2-oxoglutarate = 3-(imidazol-4-yl)-2-oxopropyl phosphate + L-glutamate. Its pathway is amino-acid biosynthesis; L-histidine biosynthesis; L-histidine from 5-phospho-alpha-D-ribose 1-diphosphate: step 7/9. In Halobacterium salinarum (strain ATCC 29341 / DSM 671 / R1), this protein is Histidinol-phosphate aminotransferase.